The following is a 326-amino-acid chain: 4-hydroxy-3-methylbut-2-enyl diphosphate reductase (326 aa).

Cysteine 22 contributes to the [4Fe-4S] cluster binding site. Histidine 51 and histidine 84 together coordinate (2E)-4-hydroxy-3-methylbut-2-enyl diphosphate. Dimethylallyl diphosphate-binding residues include histidine 51 and histidine 84. Residues histidine 51 and histidine 84 each coordinate isopentenyl diphosphate. Cysteine 106 lines the [4Fe-4S] cluster pocket. Histidine 134 provides a ligand contact to (2E)-4-hydroxy-3-methylbut-2-enyl diphosphate. Histidine 134 is a binding site for dimethylallyl diphosphate. Histidine 134 lines the isopentenyl diphosphate pocket. The active-site Proton donor is the glutamate 136. Position 174 (threonine 174) interacts with (2E)-4-hydroxy-3-methylbut-2-enyl diphosphate. Cysteine 204 is a binding site for [4Fe-4S] cluster. Residues serine 232, serine 233, asparagine 234, and serine 276 each contribute to the (2E)-4-hydroxy-3-methylbut-2-enyl diphosphate site. Dimethylallyl diphosphate is bound by residues serine 232, serine 233, asparagine 234, and serine 276. Residues serine 232, serine 233, asparagine 234, and serine 276 each contribute to the isopentenyl diphosphate site.

Belongs to the IspH family. Requires [4Fe-4S] cluster as cofactor.

It carries out the reaction isopentenyl diphosphate + 2 oxidized [2Fe-2S]-[ferredoxin] + H2O = (2E)-4-hydroxy-3-methylbut-2-enyl diphosphate + 2 reduced [2Fe-2S]-[ferredoxin] + 2 H(+). The catalysed reaction is dimethylallyl diphosphate + 2 oxidized [2Fe-2S]-[ferredoxin] + H2O = (2E)-4-hydroxy-3-methylbut-2-enyl diphosphate + 2 reduced [2Fe-2S]-[ferredoxin] + 2 H(+). Its pathway is isoprenoid biosynthesis; dimethylallyl diphosphate biosynthesis; dimethylallyl diphosphate from (2E)-4-hydroxy-3-methylbutenyl diphosphate: step 1/1. It functions in the pathway isoprenoid biosynthesis; isopentenyl diphosphate biosynthesis via DXP pathway; isopentenyl diphosphate from 1-deoxy-D-xylulose 5-phosphate: step 6/6. In terms of biological role, catalyzes the conversion of 1-hydroxy-2-methyl-2-(E)-butenyl 4-diphosphate (HMBPP) into a mixture of isopentenyl diphosphate (IPP) and dimethylallyl diphosphate (DMAPP). Acts in the terminal step of the DOXP/MEP pathway for isoprenoid precursor biosynthesis. The polypeptide is 4-hydroxy-3-methylbut-2-enyl diphosphate reductase (Bordetella parapertussis (strain 12822 / ATCC BAA-587 / NCTC 13253)).